The chain runs to 450 residues: Probable ECA polymerase (450 aa).

The next 11 membrane-spanning stretches (helical) occupy residues 6–26 (FSGL…LTWF), 37–57 (VFFS…TSVL), 63–83 (VGVA…CFYA), 118–138 (VILM…NGFL), 155–175 (GVAL…VYFL), 181–201 (AWLF…MIVG), 207–227 (IIIA…ISLW), 228–248 (MLAA…LKRY), 341–361 (LVVM…GLII), 378–398 (YKAA…IVLA), and 410–430 (VFFI…YWLF).

This sequence belongs to the WzyE family. In terms of assembly, probably part of a complex composed of WzxE, WzyE and WzzE.

The protein resides in the cell inner membrane. It participates in bacterial outer membrane biogenesis; enterobacterial common antigen biosynthesis. Functionally, probably involved in the polymerization of enterobacterial common antigen (ECA) trisaccharide repeat units. This is Probable ECA polymerase from Escherichia coli O7:K1 (strain IAI39 / ExPEC).